A 239-amino-acid chain; its full sequence is tRNA (guanine-N(1)-)-methyltransferase (239 aa).

S-adenosyl-L-methionine-binding positions include G109 and 128 to 133 (IGDYVL).

This sequence belongs to the RNA methyltransferase TrmD family. In terms of assembly, homodimer.

It localises to the cytoplasm. The enzyme catalyses guanosine(37) in tRNA + S-adenosyl-L-methionine = N(1)-methylguanosine(37) in tRNA + S-adenosyl-L-homocysteine + H(+). Functionally, specifically methylates guanosine-37 in various tRNAs. The polypeptide is tRNA (guanine-N(1)-)-methyltransferase (Thermus thermophilus (strain ATCC BAA-163 / DSM 7039 / HB27)).